We begin with the raw amino-acid sequence, 558 residues long: uncharacterized protein (558 aa).

Positions 47-78 (DFDDLNSIFKDFQKQKKNLKDNILKFYNKKKE) form a coiled coil. Disordered regions lie at residues 239–266 (NNNN…SKIE) and 424–447 (NNNN…NSGE). Positions 245-266 (TETESEIESKSESESESESKIE) are enriched in basic and acidic residues. The span at 424–444 (NNNNNNNNNNNNNNNNNNNNN) shows a compositional bias: low complexity.

This is an uncharacterized protein from Dictyostelium discoideum (Social amoeba).